Here is a 134-residue protein sequence, read N- to C-terminus: Ethylmalonyl-CoA/methylmalonyl-CoA epimerase (134 aa).

The VOC domain maps to 4-134 (RLNHVAIAVP…NGCLVELEQV (131 aa)). 3 residues coordinate Co(2+): His-7, His-79, and Glu-130. The active-site Proton donor/acceptor is the Glu-130.

Belongs to the methylmalonyl-CoA epimerase family. Requires Co(2+) as cofactor. Mn(2+) is required as a cofactor.

It carries out the reaction (2R)-ethylmalonyl-CoA = (2S)-ethylmalonyl-CoA. The enzyme catalyses (R)-methylmalonyl-CoA = (S)-methylmalonyl-CoA. Functionally, promiscuous isomerase that catalyzes epimerization of both ethylmalonyl-CoA and methylmalonyl-CoA. Has thus a dual role in the ethylmalonyl-CoA pathway for acetyl-CoA assimilation required for R.sphaeroides growth on acetate as sole carbon source. This Cereibacter sphaeroides (strain ATCC 17023 / DSM 158 / JCM 6121 / CCUG 31486 / LMG 2827 / NBRC 12203 / NCIMB 8253 / ATH 2.4.1.) (Rhodobacter sphaeroides) protein is Ethylmalonyl-CoA/methylmalonyl-CoA epimerase.